We begin with the raw amino-acid sequence, 61 residues long: Large ribosomal subunit protein uL30 (61 aa).

Belongs to the universal ribosomal protein uL30 family. As to quaternary structure, part of the 50S ribosomal subunit.

The protein is Large ribosomal subunit protein uL30 of Chlorobaculum tepidum (strain ATCC 49652 / DSM 12025 / NBRC 103806 / TLS) (Chlorobium tepidum).